Consider the following 461-residue polypeptide: D-phenylhydantoinase (461 aa).

A divalent metal cation is bound by residues histidine 59, histidine 61, and lysine 151. Position 151 is an N6-carboxylysine (lysine 151). A substrate-binding site is contributed by tyrosine 156. Residues histidine 182 and histidine 239 each contribute to the a divalent metal cation site. Serine 286 is a binding site for substrate. Residue aspartate 313 coordinates a divalent metal cation. Residue asparagine 335 coordinates substrate.

It belongs to the metallo-dependent hydrolases superfamily. Hydantoinase/dihydropyrimidinase family. As to quaternary structure, homotetramer. The cofactor is a divalent metal cation. Post-translationally, carboxylation allows a single lysine to coordinate two divalent metal cations.

It carries out the reaction D-5-phenylhydantoin + H2O = N-carbamoyl-D-phenylglycine + H(+). Functionally, catalyzes the stereospecific hydrolysis of the cyclic amide bond of D-hydantoin derivatives with an aromatic side chains at the 5'-position. Has no activity on dihydropyrimidines. The physiological function is unknown. The sequence is that of D-phenylhydantoinase from Escherichia coli O127:H6 (strain E2348/69 / EPEC).